The chain runs to 248 residues: PF03932 family protein CutC (248 aa).

It belongs to the CutC family. In terms of assembly, homodimer.

The protein localises to the cytoplasm. This chain is PF03932 family protein CutC, found in Salmonella newport (strain SL254).